The following is a 288-amino-acid chain: Phosphatidylserine decarboxylase proenzyme (288 aa).

Catalysis depends on charge relay system; for autoendoproteolytic cleavage activity residues Asp90, His147, and Ser254. The active-site Schiff-base intermediate with substrate; via pyruvic acid; for decarboxylase activity is Ser254. Position 254 is a pyruvic acid (Ser); by autocatalysis (Ser254).

It belongs to the phosphatidylserine decarboxylase family. PSD-B subfamily. Prokaryotic type I sub-subfamily. In terms of assembly, heterodimer of a large membrane-associated beta subunit and a small pyruvoyl-containing alpha subunit. Pyruvate serves as cofactor. In terms of processing, is synthesized initially as an inactive proenzyme. Formation of the active enzyme involves a self-maturation process in which the active site pyruvoyl group is generated from an internal serine residue via an autocatalytic post-translational modification. Two non-identical subunits are generated from the proenzyme in this reaction, and the pyruvate is formed at the N-terminus of the alpha chain, which is derived from the carboxyl end of the proenzyme. The autoendoproteolytic cleavage occurs by a canonical serine protease mechanism, in which the side chain hydroxyl group of the serine supplies its oxygen atom to form the C-terminus of the beta chain, while the remainder of the serine residue undergoes an oxidative deamination to produce ammonia and the pyruvoyl prosthetic group on the alpha chain. During this reaction, the Ser that is part of the protease active site of the proenzyme becomes the pyruvoyl prosthetic group, which constitutes an essential element of the active site of the mature decarboxylase.

The protein resides in the cell membrane. The catalysed reaction is a 1,2-diacyl-sn-glycero-3-phospho-L-serine + H(+) = a 1,2-diacyl-sn-glycero-3-phosphoethanolamine + CO2. It functions in the pathway phospholipid metabolism; phosphatidylethanolamine biosynthesis; phosphatidylethanolamine from CDP-diacylglycerol: step 2/2. In terms of biological role, catalyzes the formation of phosphatidylethanolamine (PtdEtn) from phosphatidylserine (PtdSer). This chain is Phosphatidylserine decarboxylase proenzyme, found in Hamiltonella defensa subsp. Acyrthosiphon pisum (strain 5AT).